A 353-amino-acid chain; its full sequence is Tetraacyldisaccharide 4'-kinase (353 aa).

66-73 (TVGGTGKT) lines the ATP pocket.

The protein belongs to the LpxK family.

It catalyses the reaction a lipid A disaccharide + ATP = a lipid IVA + ADP + H(+). It participates in glycolipid biosynthesis; lipid IV(A) biosynthesis; lipid IV(A) from (3R)-3-hydroxytetradecanoyl-[acyl-carrier-protein] and UDP-N-acetyl-alpha-D-glucosamine: step 6/6. Transfers the gamma-phosphate of ATP to the 4'-position of a tetraacyldisaccharide 1-phosphate intermediate (termed DS-1-P) to form tetraacyldisaccharide 1,4'-bis-phosphate (lipid IVA). This chain is Tetraacyldisaccharide 4'-kinase, found in Geobacter sulfurreducens (strain ATCC 51573 / DSM 12127 / PCA).